Reading from the N-terminus, the 383-residue chain is uncharacterized protein (383 aa).

It belongs to the peptidase M20 family.

This is an uncharacterized protein from Staphylococcus aureus (strain USA300).